Here is a 973-residue protein sequence, read N- to C-terminus: DNA repair protein rhp26 (973 aa).

A coiled-coil region spans residues 35–107 (ESREIEKKRL…DIKRRLNNED (73 aa)). A disordered region spans residues 230–251 (RDQASASENNKDRGEFEGKDEW). Basic and acidic residues predominate over residues 238 to 251 (NNKDRGEFEGKDEW). The 202-residue stretch at 289–490 (WELYCQEAGG…WNLFDFVFPG (202 aa)) folds into the Helicase ATP-binding domain. Position 302–309 (302–309 (DEMGLGKT)) interacts with ATP. Positions 367–386 (SREKRQYESDASESEAEESK) are disordered. The DEAH box signature appears at 441 to 444 (DEGH). In terms of domain architecture, Helicase C-terminal spans 629–789 (VIRALLTLWK…RRFFKMTDLH (161 aa)). Disordered stretches follow at residues 803 to 846 (ETGS…KGKK), 863 to 882 (KYKP…STLG), and 930 to 973 (AVSS…KQRR). Over residues 834 to 846 (DRKKHKIHDKGKK) the composition is skewed to basic residues. Polar residues-rich tracts occupy residues 868 to 882 (QESN…STLG) and 947 to 965 (STNV…SSTL).

It localises to the cytoplasm. Its subcellular location is the nucleus. Involved in transcription-coupled repair (TCR). The polypeptide is DNA repair protein rhp26 (rhp26) (Schizosaccharomyces pombe (strain 972 / ATCC 24843) (Fission yeast)).